The sequence spans 657 residues: N-acetylgalactosaminyltransferase 7 (657 aa).

The Cytoplasmic segment spans residues 1-6 (MRLKIG). The helical; Signal-anchor for type II membrane protein transmembrane segment at 7 to 29 (FILRSLLVVGSFLGLVVLWSSLT) threads the bilayer. Residues 30-657 (PRPDDPSPLS…KWEMNNIHSV (628 aa)) are Lumenal-facing. A disordered region spans residues 31–66 (RPDDPSPLSRMREDRDVNDPMPNRGGNGLAPGEDRF). 5 disulfides stabilise this stretch: Cys197–Cys435, Cys426–Cys507, Cys545–Cys562, Cys585–Cys600, and Cys625–Cys640. Residues 206-317 (LLTSSVVIVF…VNWYAPLVAP (112 aa)) form a catalytic subdomain A region. Asp247 and Arg277 together coordinate substrate. Mn(2+) is bound by residues Asp301 and His303. The interval 381 to 443 (PYRSPAMAGG…PCSRVGHIYR (63 aa)) is catalytic subdomain B. Trp412 provides a ligand contact to substrate. His440 serves as a coordination point for Mn(2+). Position 443 (Arg443) interacts with substrate. The 121-residue stretch at 532–652 (VDWGEIRGFE…SKTTQKWEMN (121 aa)) folds into the Ricin B-type lectin domain.

This sequence belongs to the glycosyltransferase 2 family. GalNAc-T subfamily. It depends on Mn(2+) as a cofactor.

It localises to the golgi apparatus membrane. It carries out the reaction L-seryl-[protein] + UDP-N-acetyl-alpha-D-galactosamine = a 3-O-[N-acetyl-alpha-D-galactosaminyl]-L-seryl-[protein] + UDP + H(+). The enzyme catalyses L-threonyl-[protein] + UDP-N-acetyl-alpha-D-galactosamine = a 3-O-[N-acetyl-alpha-D-galactosaminyl]-L-threonyl-[protein] + UDP + H(+). The protein operates within protein modification; protein glycosylation. Its function is as follows. Glycopeptide transferase involved in O-linked oligosaccharide biosynthesis, which catalyzes the transfer of an N-acetyl-D-galactosamine residue to an already glycosylated peptide. In contrast to other proteins of the family, it does not act as a peptide transferase that transfers GalNAc onto serine or threonine residue on the protein receptor, but instead requires the prior addition of a GalNAc on a peptide before adding additional GalNAc moieties. Some peptide transferase activity is however not excluded, considering that its appropriate peptide substrate may remain unidentified. The protein is N-acetylgalactosaminyltransferase 7 (GALNT7) of Pongo abelii (Sumatran orangutan).